The chain runs to 201 residues: 3-isopropylmalate dehydratase small subunit (201 aa).

It belongs to the LeuD family. LeuD type 1 subfamily. Heterodimer of LeuC and LeuD.

The enzyme catalyses (2R,3S)-3-isopropylmalate = (2S)-2-isopropylmalate. It functions in the pathway amino-acid biosynthesis; L-leucine biosynthesis; L-leucine from 3-methyl-2-oxobutanoate: step 2/4. In terms of biological role, catalyzes the isomerization between 2-isopropylmalate and 3-isopropylmalate, via the formation of 2-isopropylmaleate. This Mesorhizobium japonicum (strain LMG 29417 / CECT 9101 / MAFF 303099) (Mesorhizobium loti (strain MAFF 303099)) protein is 3-isopropylmalate dehydratase small subunit.